Here is a 681-residue protein sequence, read N- to C-terminus: MRKPKLSKLERLEKFDIFVSLSKQRSVQILMAVGLLYMLLITFEIPFVFKTGLSSLSQDPLTRPEKHNSQRELQERRAPTRPLKSLLYQESQSESPAQGLRRRTRILSSLRFDPETFNPSSKDGSVELHKSAKVAWEVGRKIWEELESGKTLKALEKEKKKKIEEHGTNSCSLSVSLTGSDLLKRGNIMELPCGLTLGSHITVVGKPRAAHSEKDPKISMLKEGDEAVKVSQFKLELQGLKAVEGEEPPRILHLNPRLKGDWSGKPVIEQNTCYRMQWGSAQRCEGWRSRDDEETVDGQVKCEKWARDDSITSKEEESSKAASWWLSRLIGRSKKVTVEWPFPFTVDKLFVLTLSAGLEGYHVSVDGKHVTSFPYRTGFTLEDATGLTINGDIDVHSVFAGSLPTSHPSFSPQRHLELSSNWQAPSLPDEQVDMFIGILSAGNHFAERMAVRRSWMQHKLVKSSKVVARFFVALHSRKEVNVELKKEAEFFGDIVIVPYMDSYDLVVLKTVAICEYGAHQLAAKFIMKCDDDTFVQVDAVLSEAKKTPTDRSLYIGNINYYHKPLRQGKWSVTYEEWPEEDYPPYANGPGYILSNDISRFIVKEFEKHKLRMFKMEDVSVGMWVEQFNNGTKPVDYIHSLRFCQFGCIENYLTAHYQSPRQMICLWDKLVLTGKPQCCNMR.

Residues 1–28 lie on the Cytoplasmic side of the membrane; the sequence is MRKPKLSKLERLEKFDIFVSLSKQRSVQ. The chain crosses the membrane as a helical; Signal-anchor for type II membrane protein span at residues 29–49; the sequence is ILMAVGLLYMLLITFEIPFVF. The Lumenal portion of the chain corresponds to 50-681; sequence KTGLSSLSQD…TGKPQCCNMR (632 aa). The tract at residues 57-80 is disordered; it reads SQDPLTRPEKHNSQRELQERRAPT. Residues 62–78 show a composition bias toward basic and acidic residues; it reads TRPEKHNSQRELQERRA. In terms of domain architecture, Galectin spans 187–401; the sequence is NIMELPCGLT…DIDVHSVFAG (215 aa). Asn-629 is a glycosylation site (N-linked (GlcNAc...) asparagine).

This sequence belongs to the glycosyltransferase 31 family. The cofactor is Mn(2+). Expressed in junveile leaves and stems, and at lower levels in cauline leaves and siliques.

Its subcellular location is the golgi apparatus membrane. Its pathway is protein modification; protein glycosylation. Functionally, possesses hydroxyproline O-galactosyltransferase activity. Transfers galactose from UDP-galactose to hydroxyproline residues in the arabinogalactan proteins (AGPs). Is specific for AGPs containing non-contiguous peptidyl hydroxyproline residues. Utilizes UDP-galactose solely as sugar donor. The addition of galactose onto the peptidyl hydroxyproline residues in AGP core proteins represents the first committed step in arabinogalactan polysaccharide addition. AGP glycans play essential roles in both vegetative and reproductive plant growth. This Arabidopsis thaliana (Mouse-ear cress) protein is Hydroxyproline O-galactosyltransferase GALT6.